Consider the following 446-residue polypeptide: Tol-Pal system protein TolB (446 aa).

The N-terminal stretch at methionine 1 to alanine 43 is a signal peptide.

This sequence belongs to the TolB family. The Tol-Pal system is composed of five core proteins: the inner membrane proteins TolA, TolQ and TolR, the periplasmic protein TolB and the outer membrane protein Pal. They form a network linking the inner and outer membranes and the peptidoglycan layer.

It is found in the periplasm. Functionally, part of the Tol-Pal system, which plays a role in outer membrane invagination during cell division and is important for maintaining outer membrane integrity. The polypeptide is Tol-Pal system protein TolB (Cupriavidus metallidurans (strain ATCC 43123 / DSM 2839 / NBRC 102507 / CH34) (Ralstonia metallidurans)).